The chain runs to 787 residues: uncharacterized protein (787 aa).

An N-acetylmethionine modification is found at Met-1. 3 disordered regions span residues Met-1–Lys-115, Thr-130–Glu-200, and Val-217–Asp-238. The span at Val-36 to Thr-54 shows a compositional bias: polar residues. Phosphoserine is present on Ser-63. Polar residues predominate over residues Thr-130–His-142. Low complexity predominate over residues Ser-160–Thr-169. Residues Thr-170–Ser-184 are compositionally biased toward basic and acidic residues. Low complexity predominate over residues Ser-218–Asn-230. Phosphoserine is present on residues Ser-254, Ser-313, Ser-342, Ser-345, Ser-390, Ser-477, Ser-492, Ser-546, Ser-683, and Ser-699.

The protein localises to the cytoplasm. This is an uncharacterized protein from Saccharomyces cerevisiae (strain ATCC 204508 / S288c) (Baker's yeast).